A 161-amino-acid polypeptide reads, in one-letter code: Endoribonuclease YbeY (161 aa).

The Zn(2+) site is built by H121, H125, and H131.

It belongs to the endoribonuclease YbeY family. Zn(2+) is required as a cofactor.

It is found in the cytoplasm. Single strand-specific metallo-endoribonuclease involved in late-stage 70S ribosome quality control and in maturation of the 3' terminus of the 16S rRNA. This chain is Endoribonuclease YbeY, found in Xanthomonas euvesicatoria pv. vesicatoria (strain 85-10) (Xanthomonas campestris pv. vesicatoria).